The following is a 318-amino-acid chain: Nisin-resistance protein (318 aa).

Residues 7-28 (ILLGLVAVCALFLGIIYLWGYK) traverse the membrane as a helical segment.

The protein localises to the cell membrane. This Lactococcus lactis subsp. lactis (Streptococcus lactis) protein is Nisin-resistance protein (nsr).